A 394-amino-acid polypeptide reads, in one-letter code: F-box protein At2g17830 (394 aa).

The F-box domain maps to 1–47 (MAIMSDLPRDLLAEILSRVPLASLRSVRFTCKKWNDLSKDRSFLKKQ).

The sequence is that of F-box protein At2g17830 from Arabidopsis thaliana (Mouse-ear cress).